Consider the following 111-residue polypeptide: Large ribosomal subunit protein uL22 (111 aa).

The protein belongs to the universal ribosomal protein uL22 family. In terms of assembly, part of the 50S ribosomal subunit.

Functionally, this protein binds specifically to 23S rRNA; its binding is stimulated by other ribosomal proteins, e.g. L4, L17, and L20. It is important during the early stages of 50S assembly. It makes multiple contacts with different domains of the 23S rRNA in the assembled 50S subunit and ribosome. Its function is as follows. The globular domain of the protein is located near the polypeptide exit tunnel on the outside of the subunit, while an extended beta-hairpin is found that lines the wall of the exit tunnel in the center of the 70S ribosome. The sequence is that of Large ribosomal subunit protein uL22 from Geobacter sulfurreducens (strain ATCC 51573 / DSM 12127 / PCA).